The primary structure comprises 841 residues: DNA ligase (841 aa).

NAD(+) is bound by residues 33–37 (DAQYD), 82–83 (SL), and Glu-114. Lys-116 functions as the N6-AMP-lysine intermediate in the catalytic mechanism. NAD(+)-binding residues include Arg-137, Glu-174, Lys-300, and Lys-324. Zn(2+) is bound by residues Cys-418, Cys-421, Cys-436, and Cys-442. One can recognise a BRCT domain in the interval 758 to 841 (EKTGPLDGQT…AFLGEHGQQR (84 aa)).

It belongs to the NAD-dependent DNA ligase family. LigA subfamily. Mg(2+) serves as cofactor. The cofactor is Mn(2+).

The catalysed reaction is NAD(+) + (deoxyribonucleotide)n-3'-hydroxyl + 5'-phospho-(deoxyribonucleotide)m = (deoxyribonucleotide)n+m + AMP + beta-nicotinamide D-nucleotide.. Functionally, DNA ligase that catalyzes the formation of phosphodiester linkages between 5'-phosphoryl and 3'-hydroxyl groups in double-stranded DNA using NAD as a coenzyme and as the energy source for the reaction. It is essential for DNA replication and repair of damaged DNA. The sequence is that of DNA ligase from Xanthomonas oryzae pv. oryzae (strain KACC10331 / KXO85).